Reading from the N-terminus, the 1680-residue chain is Alpha-protein kinase 3 (1680 aa).

The disordered stretch occupies residues M1–R37. Gly residues predominate over residues R9–G21. Residues P77 to T173 form the Ig-like 1 domain. Position 229 is a phosphoserine (S229). Disordered stretches follow at residues S237 to D288, E302 to E759, S785 to S950, E1078 to L1128, and P1147 to A1244. Residues K320–E337 are compositionally biased toward basic and acidic residues. Residues S339–P353 show a composition bias toward polar residues. A compositionally biased stretch (pro residues) spans A402–V426. Over residues E514–L532 the composition is skewed to low complexity. Polar residues-rich tracts occupy residues S557 to K566 and E731 to S744. The span at S785–G796 shows a compositional bias: basic and acidic residues. The segment covering S917–E932 has biased composition (polar residues). 2 stretches are compositionally biased toward basic and acidic residues: residues E1087–T1111 and A1151–S1165. S1199 carries the phosphoserine modification. Basic and acidic residues predominate over residues D1231–A1244. The 89-residue stretch at P1251–S1339 folds into the Ig-like 2 domain. Cysteines 1273 and 1323 form a disulfide. Positions K1367 to L1600 constitute an Alpha-type protein kinase domain. Positions P1603–R1680 are disordered. Composition is skewed to polar residues over residues P1639–T1660 and D1671–R1680.

This sequence belongs to the protein kinase superfamily. Alpha-type protein kinase family. ALPK subfamily. Expressed in the heart and skeletal muscle of adult mice.

The protein resides in the nucleus. The enzyme catalyses L-seryl-[protein] + ATP = O-phospho-L-seryl-[protein] + ADP + H(+). It catalyses the reaction L-threonyl-[protein] + ATP = O-phospho-L-threonyl-[protein] + ADP + H(+). Functionally, involved in cardiomyocyte differentiation. This chain is Alpha-protein kinase 3, found in Mus musculus (Mouse).